Here is a 137-residue protein sequence, read N- to C-terminus: Large ribosomal subunit protein uL16 (137 aa).

This sequence belongs to the universal ribosomal protein uL16 family. Part of the 50S ribosomal subunit.

Binds 23S rRNA and is also seen to make contacts with the A and possibly P site tRNAs. The polypeptide is Large ribosomal subunit protein uL16 (Oleidesulfovibrio alaskensis (strain ATCC BAA-1058 / DSM 17464 / G20) (Desulfovibrio alaskensis)).